Here is a 387-residue protein sequence, read N- to C-terminus: ATP phosphoribosyltransferase regulatory subunit (387 aa).

The protein belongs to the class-II aminoacyl-tRNA synthetase family. HisZ subfamily. As to quaternary structure, heteromultimer composed of HisG and HisZ subunits.

It is found in the cytoplasm. It functions in the pathway amino-acid biosynthesis; L-histidine biosynthesis; L-histidine from 5-phospho-alpha-D-ribose 1-diphosphate: step 1/9. Required for the first step of histidine biosynthesis. May allow the feedback regulation of ATP phosphoribosyltransferase activity by histidine. In Psychrobacter arcticus (strain DSM 17307 / VKM B-2377 / 273-4), this protein is ATP phosphoribosyltransferase regulatory subunit.